Here is a 177-residue protein sequence, read N- to C-terminus: Large ribosomal subunit protein uL6 (177 aa).

Belongs to the universal ribosomal protein uL6 family. As to quaternary structure, part of the 50S ribosomal subunit.

In terms of biological role, this protein binds to the 23S rRNA, and is important in its secondary structure. It is located near the subunit interface in the base of the L7/L12 stalk, and near the tRNA binding site of the peptidyltransferase center. This is Large ribosomal subunit protein uL6 from Marinomonas sp. (strain MWYL1).